The primary structure comprises 313 residues: UDP-N-acetylenolpyruvoylglucosamine reductase (313 aa).

Residues 31 to 207 (VGGPADALVA…TGVDLGLGFD (177 aa)) form the FAD-binding PCMH-type domain. Residue Arg180 is part of the active site. Cys236 serves as the catalytic Proton donor. The active site involves Glu307.

Belongs to the MurB family. The cofactor is FAD.

The protein localises to the cytoplasm. The catalysed reaction is UDP-N-acetyl-alpha-D-muramate + NADP(+) = UDP-N-acetyl-3-O-(1-carboxyvinyl)-alpha-D-glucosamine + NADPH + H(+). Its pathway is cell wall biogenesis; peptidoglycan biosynthesis. In terms of biological role, cell wall formation. The chain is UDP-N-acetylenolpyruvoylglucosamine reductase from Desulfosudis oleivorans (strain DSM 6200 / JCM 39069 / Hxd3) (Desulfococcus oleovorans).